The chain runs to 271 residues: Phosphoribosylformylglycinamidine synthase subunit PurQ (271 aa).

The Glutamine amidotransferase type-1 domain maps to 7–253; the sequence is KVAVLRMEGT…FGYQVGRREG (247 aa). Cysteine 104 (nucleophile) is an active-site residue. Residues histidine 238 and glutamate 240 contribute to the active site.

As to quaternary structure, part of the FGAM synthase complex composed of 1 PurL, 1 PurQ and 2 PurS subunits.

Its subcellular location is the cytoplasm. It catalyses the reaction N(2)-formyl-N(1)-(5-phospho-beta-D-ribosyl)glycinamide + L-glutamine + ATP + H2O = 2-formamido-N(1)-(5-O-phospho-beta-D-ribosyl)acetamidine + L-glutamate + ADP + phosphate + H(+). The enzyme catalyses L-glutamine + H2O = L-glutamate + NH4(+). Its pathway is purine metabolism; IMP biosynthesis via de novo pathway; 5-amino-1-(5-phospho-D-ribosyl)imidazole from N(2)-formyl-N(1)-(5-phospho-D-ribosyl)glycinamide: step 1/2. Functionally, part of the phosphoribosylformylglycinamidine synthase complex involved in the purines biosynthetic pathway. Catalyzes the ATP-dependent conversion of formylglycinamide ribonucleotide (FGAR) and glutamine to yield formylglycinamidine ribonucleotide (FGAM) and glutamate. The FGAM synthase complex is composed of three subunits. PurQ produces an ammonia molecule by converting glutamine to glutamate. PurL transfers the ammonia molecule to FGAR to form FGAM in an ATP-dependent manner. PurS interacts with PurQ and PurL and is thought to assist in the transfer of the ammonia molecule from PurQ to PurL. In Archaeoglobus fulgidus (strain ATCC 49558 / DSM 4304 / JCM 9628 / NBRC 100126 / VC-16), this protein is Phosphoribosylformylglycinamidine synthase subunit PurQ.